The following is a 101-amino-acid chain: Gibberellin-regulated protein 6 (101 aa).

Residues methionine 1–serine 23 form the signal peptide.

It belongs to the GASA family. Post-translationally, six disulfide bonds may be present.

Its subcellular location is the secreted. Gibberellin-regulated protein that may function in hormonal controlled steps of development such as seed germination, flowering and seed maturation. In Arabidopsis thaliana (Mouse-ear cress), this protein is Gibberellin-regulated protein 6 (GASA6).